The following is a 124-amino-acid chain: Galanin peptides (124 aa).

Positions 1–19 (MARGSVILLAWLLLVATLS) are cleaved as a signal peptide. Residues 20–30 (ATLGLGMPTKE) constitute a propeptide that is removed on maturation. The residue at position 61 (threonine 61) is a Threonine amide. A phosphoserine mark is found at serine 117 and serine 118.

Belongs to the galanin family.

The protein resides in the secreted. Functionally, endocrine hormone of the central and peripheral nervous systems that binds and activates the G protein-coupled receptors GALR1, GALR2, and GALR3. This small neuropeptide may regulate diverse physiologic functions including contraction of smooth muscle of the gastrointestinal and genitourinary tract, growth hormone and insulin release and adrenal secretion. The protein is Galanin peptides (Gal) of Rattus norvegicus (Rat).